The chain runs to 463 residues: Argininosuccinate lyase (463 aa).

It belongs to the lyase 1 family. Argininosuccinate lyase subfamily.

The protein resides in the cytoplasm. The catalysed reaction is 2-(N(omega)-L-arginino)succinate = fumarate + L-arginine. It functions in the pathway amino-acid biosynthesis; L-arginine biosynthesis; L-arginine from L-ornithine and carbamoyl phosphate: step 3/3. The chain is Argininosuccinate lyase from Chlorobaculum tepidum (strain ATCC 49652 / DSM 12025 / NBRC 103806 / TLS) (Chlorobium tepidum).